Here is a 166-residue protein sequence, read N- to C-terminus: UPF0304 protein VIBHAR_01542 (166 aa).

Belongs to the UPF0304 family.

This chain is UPF0304 protein VIBHAR_01542, found in Vibrio campbellii (strain ATCC BAA-1116).